We begin with the raw amino-acid sequence, 421 residues long: Carboxypeptidase A4 (421 aa).

The signal sequence occupies residues 1-16 (MRWILFIGALIGSSIC). The propeptide at 17 to 113 (GQEKFFGDQV…EMQHNEGQER (97 aa)) is activation peptide. A protein-binding residues include P69, V71, N119, Y123, H124, S125, E127, and F163. The 295-residue stretch at 122 to 416 (AYHSLEAIYH…LGLKTIMEHV (295 aa)) folds into the Peptidase M14 domain. 2 residues coordinate Zn(2+): H181 and E184. A protein-binding residues include R196, K197, and S248. Cysteines 250 and 273 form a disulfide. N-linked (GlcNAc...) asparagine glycosylation is present at N260. Residue D270 participates in a protein binding. H308 is a binding site for Zn(2+). E382 (proton donor/acceptor) is an active-site residue.

This sequence belongs to the peptidase M14 family. Monomer. Interacts with LXN. Zn(2+) serves as cofactor. Fetal expression in the adrenal gland, brain, heart, intestine, kidney, liver and lung. Except for fetal brain that shows no imprinting, expression was found preferentially from the maternal allele.

It localises to the secreted. Its activity is regulated as follows. Inhibited by interaction with the metallocarboxypeptidase inhibitor (MCPI) from N.versicolor that binds to the catalytic zinc ion. Also inhibited by interaction with the S.magnifica carboxypeptidase inhibitor SmCI that penetrates the active site groove and inhibits activity by emulating a C-terminal substrate. Additionally inhibited by a carboxypeptidase inhibitor from H.medicinalis (leech) and R.bursa (tick). Functionally, metalloprotease that cleaves hydrophobic C-terminal residues with a preference for -Phe, -Leu, -Ile, -Met, -Tyr and -Val. May function in peptide hormone and/or neuropeptide catabolism. In Homo sapiens (Human), this protein is Carboxypeptidase A4 (CPA4).